The primary structure comprises 194 residues: Putative manganese efflux pump MntP (194 aa).

6 helical membrane passes run 6–26 (LILV…GLAL), 35–55 (WLFA…GLYL), 66–86 (VAAI…LWEA), 109–129 (GVLG…LDAL), 142–162 (VPLT…LGLL), and 174–194 (RAEL…LVGV).

The protein belongs to the MntP (TC 9.B.29) family.

The protein localises to the cell membrane. Its function is as follows. Probably functions as a manganese efflux pump. This chain is Putative manganese efflux pump MntP, found in Moorella thermoacetica (strain ATCC 39073 / JCM 9320).